The following is a 401-amino-acid chain: Phosphoglycerate kinase (401 aa).

Residues 24-26, arginine 40, 63-66, arginine 122, and arginine 155 contribute to the substrate site; these read DFN and HFGR. Residues lysine 206, glycine 297, glutamate 328, and 357–360 each bind ATP; that span reads GGDS.

It belongs to the phosphoglycerate kinase family. As to quaternary structure, monomer.

The protein resides in the cytoplasm. The catalysed reaction is (2R)-3-phosphoglycerate + ATP = (2R)-3-phospho-glyceroyl phosphate + ADP. Its pathway is carbohydrate degradation; glycolysis; pyruvate from D-glyceraldehyde 3-phosphate: step 2/5. This is Phosphoglycerate kinase from Acaryochloris marina (strain MBIC 11017).